The sequence spans 91 residues: Antitoxin RelJ (91 aa).

Belongs to the phD/YefM antitoxin family. As to quaternary structure, homodimer.

Functionally, antitoxin component of a type II toxin-antitoxin (TA) system. A probable antitoxin for the putative mRNA interferase RelK. The protein is Antitoxin RelJ (relJ) of Mycobacterium tuberculosis (strain CDC 1551 / Oshkosh).